A 131-amino-acid chain; its full sequence is Transcription antitermination protein NusB (131 aa).

It belongs to the NusB family.

In terms of biological role, involved in transcription antitermination. Required for transcription of ribosomal RNA (rRNA) genes. Binds specifically to the boxA antiterminator sequence of the ribosomal RNA (rrn) operons. The sequence is that of Transcription antitermination protein NusB from Bacillus subtilis (strain 168).